A 262-amino-acid polypeptide reads, in one-letter code: Tryptophan synthase alpha chain (262 aa).

Active-site proton acceptor residues include glutamate 52 and aspartate 63.

The protein belongs to the TrpA family. Tetramer of two alpha and two beta chains.

It catalyses the reaction (1S,2R)-1-C-(indol-3-yl)glycerol 3-phosphate + L-serine = D-glyceraldehyde 3-phosphate + L-tryptophan + H2O. It functions in the pathway amino-acid biosynthesis; L-tryptophan biosynthesis; L-tryptophan from chorismate: step 5/5. The alpha subunit is responsible for the aldol cleavage of indoleglycerol phosphate to indole and glyceraldehyde 3-phosphate. The protein is Tryptophan synthase alpha chain of Mycobacteroides abscessus (strain ATCC 19977 / DSM 44196 / CCUG 20993 / CIP 104536 / JCM 13569 / NCTC 13031 / TMC 1543 / L948) (Mycobacterium abscessus).